The primary structure comprises 607 residues: Fatty acid amide hydrolase (607 aa).

Catalysis depends on charge relay system residues Lys-204 and Ser-280. Substrate is bound at residue 301–304 (GGGS). The active-site Acyl-ester intermediate is the Ser-304.

It belongs to the amidase family. In terms of assembly, forms homodimers.

The protein resides in the endoplasmic reticulum membrane. The protein localises to the cell membrane. The enzyme catalyses N-(9Z,12Z-octadecadienoyl)-ethanolamine + H2O = ethanolamine + (9Z,12Z)-octadecadienoate. Catalyzes the hydrolysis of bioactive endogenous fatty acid amides to their corresponding acids. The hydrolysis of endogenous amidated lipids terminates their participation as lipid mediators in various signaling systems. Converts a wide range of N-acylethanolamines (NAEs) to their corresponding free fatty acids and ethanolamine. The chain is Fatty acid amide hydrolase from Medicago truncatula (Barrel medic).